Here is a 428-residue protein sequence, read N- to C-terminus: Somatostatin receptor type 3 (428 aa).

The Extracellular portion of the chain corresponds to 1-45 (MAAVTYPSSVPTTLDPGNASSAWPLDTSLGNASAGTSLAGLAVSG). 2 N-linked (GlcNAc...) asparagine glycosylation sites follow: Asn18 and Asn31. The chain crosses the membrane as a helical span at residues 46–71 (ILISLVYLVVCVVGLLGNSLVIYVVL). Over 72 to 81 (RHTSSPSVTS) the chain is Cytoplasmic. A helical transmembrane segment spans residues 82 to 103 (VYILNLALADELFMLGLPFLAA). Over 104–118 (QNALSYWPFGSLMCR) the chain is Extracellular. A disulfide bond links Cys117 and Cys192. The helical transmembrane segment at 119–140 (LVMAVDGINQFTSIFCLTVMSV) threads the bilayer. The Cytoplasmic segment spans residues 141–162 (DRYLAVVHPTRSARWRTAPVAR). The helical transmembrane segment at 163 to 182 (MVSAAVWVASAVVVLPVVVF) threads the bilayer. Residues 183–206 (SGVPRGMSTCHMQWPEPAAAWRTA) are Extracellular-facing. The helical transmembrane segment at 207-232 (FIIYTAALGFFGPLLVICLCYLLIVV) threads the bilayer. Residues 233–266 (KVRSTTRRVRAPSCQWVQAPACQRRRRSERRVTR) lie on the Cytoplasmic side of the membrane. Residues 267-288 (MVVAVVALFVLCWMPFYLLNIV) form a helical membrane-spanning segment. At 289–302 (NVVCPLPEEPAFFG) the chain is on the extracellular side. The chain crosses the membrane as a helical span at residues 303–325 (LYFLVVALPYANSCANPILYGFL). Residues 326–428 (SYRFKQGFRR…GDKASTLSHL (103 aa)) lie on the Cytoplasmic side of the membrane. Phosphoserine occurs at positions 341, 346, and 351. A disordered region spans residues 343-428 (RVRSQEPGSG…GDKASTLSHL (86 aa)). Residue Thr357 is modified to Phosphothreonine. The span at 357–370 (TEEEEDEEEEERRE) shows a compositional bias: acidic residues. A compositionally biased stretch (polar residues) spans 385 to 412 (RLSQIAQPGPSGQQQRPCTGTAKEQQLL).

It belongs to the G-protein coupled receptor 1 family. As to quaternary structure, homodimer and heterodimer with SSTR2. Heterodimerization with SSTR2 inactivates SSTR3 receptor function. Post-translationally, phosphorylated. Phosphorylation increases upon somatostatin binding. In terms of tissue distribution, densely expressed in cerebellum and at moderate levels in the amygdala, cortex, striatum, spleen, liver and pituitary.

It localises to the cell membrane. Its function is as follows. Receptor for somatostatin-14 and -28. This receptor is coupled via pertussis toxin sensitive G proteins to inhibition of adenylyl cyclase. In Rattus norvegicus (Rat), this protein is Somatostatin receptor type 3 (Sstr3).